The following is a 119-amino-acid chain: uncharacterized protein (119 aa).

This is an uncharacterized protein from Ureaplasma parvum serovar 3 (strain ATCC 700970).